We begin with the raw amino-acid sequence, 147 residues long: Hemoglobin subunit beta-2 (147 aa).

The Globin domain occupies 3–147 (HWTAEEKATI…LVAALSHGYF (145 aa)). Residues His-64 and His-93 each coordinate heme b.

Belongs to the globin family. Heterotetramer of two alpha chains and two beta chains. As to expression, red blood cells.

This is a larval (tadpole) beta-globin. The polypeptide is Hemoglobin subunit beta-2 (hbb2) (Xenopus tropicalis (Western clawed frog)).